The primary structure comprises 438 residues: Beta-1,3-galactosyl-O-glycosyl-glycoprotein beta-1,6-N-acetylglucosaminyltransferase 3 (438 aa).

Residues 1–6 lie on the Cytoplasmic side of the membrane; that stretch reads MVQWKR. Residues 7-26 form a helical; Signal-anchor for type II membrane protein membrane-spanning segment; the sequence is LCQLHYLWALGCYMLLATVA. Residues 27–438 are Lumenal-facing; that stretch reads LKLSFRLKCD…RYKAIYGTEL (412 aa). 4 disulfides stabilise this stretch: Cys70-Cys227, Cys161-Cys382, Cys182-Cys209, and Cys391-Cys423. N-linked (GlcNAc...) asparagine glycosylation occurs at Asn289.

It belongs to the glycosyltransferase 14 family. Post-translationally, N-glycosylated. In terms of tissue distribution, primarily expressed in mucus-secreting tissues. Expressed in colon, kidney, small intestine, trachea, and stomach, where mucin is produced.

Its subcellular location is the golgi apparatus membrane. It carries out the reaction a 3-O-[beta-D-galactosyl-(1-&gt;3)-N-acetyl-alpha-D-galactosaminyl]-L-seryl-[protein] + UDP-N-acetyl-alpha-D-glucosamine = 3-O-{beta-D-galactosyl-(1-&gt;3)-[N-acetyl-beta-D-glucosaminyl-(1-&gt;6)]-N-acetyl-alpha-D-galactosaminyl}-L-seryl-[protein] + UDP + H(+). The catalysed reaction is a 3-O-[beta-D-galactosyl-(1-&gt;3)-N-acetyl-alpha-D-galactosaminyl]-L-threonyl-[protein] + UDP-N-acetyl-alpha-D-glucosamine = a 3-O-{beta-D-galactosyl-(1-&gt;3)-[N-acetyl-beta-D-glucosaminyl-(1-&gt;6)]-N-acetyl-alpha-D-galactosaminyl}-L-threonyl-[protein] + UDP + H(+). It catalyses the reaction a beta-D-Gal-(1-&gt;4)-beta-D-GlcNAc-(1-&gt;3)-beta-D-Gal-(1-&gt;4)-beta-D-GlcNAc derivative + UDP-N-acetyl-alpha-D-glucosamine = a beta-D-Gal-(1-&gt;4)-beta-D-GlcNAc-(1-&gt;3)-[beta-D-GlcNAc-(1-&gt;6)]-beta-D-Gal-(1-&gt;4)-N-acetyl-beta-D-glucosaminyl derivative + UDP + H(+). The enzyme catalyses 3-O-[N-acetyl-beta-D-glucosaminyl-(1-&gt;3)-N-acetyl-alpha-D-galactosaminyl]-L-seryl-[protein] + UDP-N-acetyl-alpha-D-glucosamine = 3-O-[N-acetyl-beta-D-glucosaminyl-(1-&gt;3)-[N-acetyl-beta-D-glucosaminyl-(1-&gt;6)]-N-acetyl-alpha-D-galactosaminyl]-L-seryl-[protein] + UDP + H(+). It carries out the reaction a 3-O-[N-acetyl-beta-D-glucosaminyl-(1-&gt;3)-N-acetyl-alpha-D-galactosaminyl]-L-threonyl-[protein] + UDP-N-acetyl-alpha-D-glucosamine = 3-O-[N-acetyl-beta-D-glucosaminyl-(1-&gt;3)-[N-acetyl-beta-D-glucosaminyl-(1-&gt;6)]-N-acetyl-alpha-D-galactosaminyl]-L-threonyl-[protein] + UDP + H(+). It functions in the pathway protein modification; protein glycosylation. Glycosyltransferase that can synthesize all known mucin beta 6 N-acetylglucosaminides. Mediates core 2 and core 4 O-glycan branching, 2 important steps in mucin-type biosynthesis. Also has I-branching enzyme activity by converting linear into branched poly-N-acetyllactosaminoglycans, leading to introduce the blood group I antigen during embryonic development. The polypeptide is Beta-1,3-galactosyl-O-glycosyl-glycoprotein beta-1,6-N-acetylglucosaminyltransferase 3 (GCNT3) (Homo sapiens (Human)).